Reading from the N-terminus, the 1668-residue chain is Probable histone acetyltransferase HAC-like 1 (1668 aa).

Disordered regions lie at residues 1 to 34, 459 to 493, and 528 to 551; these read MNVG…ADGL, QQQP…SEQG, and KGGQ…HDSQ. The segment covering 11-23 has biased composition (polar residues); it reads GQMSGQAPQTNQV. Positions 459–469 are enriched in low complexity; that stretch reads QQQPNSQHQQS. Polar residues-rich tracts occupy residues 470 to 491 and 536 to 551; these read ILRS…QLSE and LSSS…HDSQ. The TAZ-type 1 zinc finger occupies 651-732; the sequence is AAGNIYYFRQ…DLQCPVCSNA (82 aa). A compositionally biased stretch (basic and acidic residues) spans 886–899; sequence KETSETAPEVKNEA. A disordered region spans residues 886–912; sequence KETSETAPEVKNEANDSTDITVSKSGK. Residues 900–909 are compositionally biased toward polar residues; sequence NDSTDITVSK. The PHD-type zinc-finger motif lies at 1002–1079; that stretch reads HFFCIPCYNE…EYTCPNCYVE (78 aa). The CBP/p300-type HAT domain occupies 1094–1530; that stretch reads VLGAKDLPRT…VLYHLHNPTA (437 aa). Residues 1217–1219, 1236–1237, and Trp1292 each bind acetyl-CoA; these read LDS and RT. Positions 1342-1365 form a coiled coil; sequence GAAEDMINQLRQEEDDRKQQKKGK. Residues 1412-1475 form a ZZ-type zinc finger; the sequence is HLQYSCSHCC…TLHPVDIVGL (64 aa). Positions 1417, 1420, 1432, 1435, 1441, 1444, 1457, and 1465 each coordinate Zn(2+). A TAZ-type 2 zinc finger spans residues 1553-1634; sequence EVCPDFDLRK…GCNVPRCRDL (82 aa). The stretch at 1630–1650 forms a coiled coil; it reads RCRDLKEHLRRLQQQSDSRRR.

Its subcellular location is the nucleus. It catalyses the reaction L-lysyl-[protein] + acetyl-CoA = N(6)-acetyl-L-lysyl-[protein] + CoA + H(+). Its function is as follows. Acetyltransferase enzyme. Acetylates histones, giving a specific tag for transcriptional activation. This chain is Probable histone acetyltransferase HAC-like 1, found in Oryza sativa subsp. japonica (Rice).